The chain runs to 195 residues: Imidazoleglycerol-phosphate dehydratase (195 aa).

The protein belongs to the imidazoleglycerol-phosphate dehydratase family.

It localises to the cytoplasm. It catalyses the reaction D-erythro-1-(imidazol-4-yl)glycerol 3-phosphate = 3-(imidazol-4-yl)-2-oxopropyl phosphate + H2O. It functions in the pathway amino-acid biosynthesis; L-histidine biosynthesis; L-histidine from 5-phospho-alpha-D-ribose 1-diphosphate: step 6/9. In Shouchella clausii (strain KSM-K16) (Alkalihalobacillus clausii), this protein is Imidazoleglycerol-phosphate dehydratase.